Consider the following 669-residue polypeptide: Bestrophin-3 (669 aa).

The Cytoplasmic portion of the chain corresponds to 1–31 (MTVTYSSKVANATFFGFHRLLLKWRGSIYKL). Ala10 contacts Ca(2+). Residues 32 to 51 (LYREFIVFAVLYTAISLVYR) traverse the membrane as a helical segment. Residues 52–60 (LLLTGAQKR) lie on the Extracellular side of the membrane. The chain crosses the membrane as a helical span at residues 61-82 (YFEKLSIYCDRYAEQIPVTFVL). The Cytoplasmic portion of the chain corresponds to 83 to 237 (GFYVTLVVNR…DWVGIPLVYT (155 aa)). A helical membrane pass occupies residues 238-255 (QVVTLAVYTFFFACLIGR). Topologically, residues 256–274 (QFLDPTKGYVGHDLDLYVP) are extracellular. Residues 275–288 (IFTLLQFFFYAGWL) form a helical membrane-spanning segment. Over 289-669 (KVAEQLINPF…GTPQRPRTWF (381 aa)) the chain is Cytoplasmic. Ca(2+)-binding residues include Gln293, Asn296, Asp301, and Asp304. Disordered stretches follow at residues 399–496 (LSTH…TKMP), 533–560 (QPSG…SAST), 591–627 (TSLG…GAGS), and 646–669 (ILEF…RTWF). Basic residues predominate over residues 440–451 (NPHRGSPTRKQS). Residues 475-492 (RTSTLQSLSPQSSVRSSP) are compositionally biased toward low complexity. A compositionally biased stretch (polar residues) spans 533-543 (QPSGTEQQVEP). The span at 646–656 (ILEFNNEHTGE) shows a compositional bias: basic and acidic residues.

This sequence belongs to the anion channel-forming bestrophin (TC 1.A.46) family. Calcium-sensitive chloride channel subfamily. Expressed in heart. As to expression, expressed in brain, retina/retinal pigment epithelium (RPE) and skeletal muscle. Expressed in acinar cells of parotid glands. Expressed in lung, kidney and testis.

It localises to the cell membrane. It catalyses the reaction chloride(in) = chloride(out). Functionally, ligand-gated anion channel that allows the movement of chloride monoatomic anions across cell membranes when activated by calcium (Ca2+). Does not function as calcium-gated chloride channel. The sequence is that of Bestrophin-3 (Best3) from Mus musculus (Mouse).